The primary structure comprises 311 residues: Methionyl-tRNA formyltransferase (311 aa).

Residue 110–113 (SLLP) participates in (6S)-5,6,7,8-tetrahydrofolate binding.

Belongs to the Fmt family.

The catalysed reaction is L-methionyl-tRNA(fMet) + (6R)-10-formyltetrahydrofolate = N-formyl-L-methionyl-tRNA(fMet) + (6S)-5,6,7,8-tetrahydrofolate + H(+). Attaches a formyl group to the free amino group of methionyl-tRNA(fMet). The formyl group appears to play a dual role in the initiator identity of N-formylmethionyl-tRNA by promoting its recognition by IF2 and preventing the misappropriation of this tRNA by the elongation apparatus. The polypeptide is Methionyl-tRNA formyltransferase (Streptococcus pyogenes serotype M49 (strain NZ131)).